An 86-amino-acid chain; its full sequence is Apolipoprotein C-I (86 aa).

The N-terminal stretch at 1-26 (MRLFLSLPVLVVVLLMILEGPGPAQG) is a signal peptide.

The protein belongs to the apolipoprotein C1 family.

The protein resides in the secreted. Functionally, inhibitor of lipoprotein binding to the low density lipoprotein (LDL) receptor, LDL receptor-related protein, and very low density lipoprotein (VLDL) receptor. Associates with high density lipoproteins (HDL) and the triacylglycerol-rich lipoproteins in the plasma and makes up about 10% of the protein of the VLDL and 2% of that of HDL. Appears to interfere directly with fatty acid uptake and is also the major plasma inhibitor of cholesteryl ester transfer protein (CETP). Binds free fatty acids and reduces their intracellular esterification. Modulates the interaction of APOE with beta-migrating VLDL and inhibits binding of beta-VLDL to the LDL receptor-related protein. The protein is Apolipoprotein C-I (APOC1) of Ateles geoffroyi (Black-handed spider monkey).